A 354-amino-acid chain; its full sequence is Peptide chain release factor 1 (354 aa).

Q232 is modified (N5-methylglutamine).

The protein belongs to the prokaryotic/mitochondrial release factor family. Methylated by PrmC. Methylation increases the termination efficiency of RF1.

The protein localises to the cytoplasm. Peptide chain release factor 1 directs the termination of translation in response to the peptide chain termination codons UAG and UAA. This chain is Peptide chain release factor 1, found in Phytoplasma australiense.